We begin with the raw amino-acid sequence, 430 residues long: MHDIRAIRENPAAFDAALSRRGSAPVSSDILALDEARRGKILAAETAQADQNKASKEVGAAKARGDEAEFERLRALVAEKKAEIAAMQAEAKELDTQLSELLAGLPNLPAEDVPQGADEADNVELHRWGTPREMDFAPKEHFDLASVQDGMDFETAAKLSGARFVLLSGAVARIHRALAQFMLDTHSEQNGLTEVNGPVLVLSEMMYGTGQLPKFGEDSYQTREGWWLIPTSEVSLTNIVNGSTIAEDYLPRRYTAHSLCFRSEAGSAGKDTRGMLRQHQFEKVEMVSVTHPDHSDAEQKRMLRCAEGILEALGIPYRTIVLCTGDMGFGARRTYDIEAWLPGQNTYREISSVSTCGDFQARRMNARFKPADGGKPQFVHTLNGSGLAVGRCLIAVLENGQNADGSVTLPQALAPYLGGKLTLNTDGTLN.

231–233 (TSE) is a binding site for L-serine. An ATP-binding site is contributed by 262–264 (RSE). Residue glutamate 285 coordinates L-serine. ATP is bound at residue 349-352 (EISS). Serine 385 lines the L-serine pocket.

This sequence belongs to the class-II aminoacyl-tRNA synthetase family. Type-1 seryl-tRNA synthetase subfamily. In terms of assembly, homodimer. The tRNA molecule binds across the dimer.

It localises to the cytoplasm. It catalyses the reaction tRNA(Ser) + L-serine + ATP = L-seryl-tRNA(Ser) + AMP + diphosphate + H(+). The catalysed reaction is tRNA(Sec) + L-serine + ATP = L-seryl-tRNA(Sec) + AMP + diphosphate + H(+). It participates in aminoacyl-tRNA biosynthesis; selenocysteinyl-tRNA(Sec) biosynthesis; L-seryl-tRNA(Sec) from L-serine and tRNA(Sec): step 1/1. Its function is as follows. Catalyzes the attachment of serine to tRNA(Ser). Is also able to aminoacylate tRNA(Sec) with serine, to form the misacylated tRNA L-seryl-tRNA(Sec), which will be further converted into selenocysteinyl-tRNA(Sec). The polypeptide is Serine--tRNA ligase (Ruegeria pomeroyi (strain ATCC 700808 / DSM 15171 / DSS-3) (Silicibacter pomeroyi)).